Here is a 1738-residue protein sequence, read N- to C-terminus: Sodium leak channel NALCN (1738 aa).

At 1 to 36 (MLKRKQSSRVEAQPVTDFGPDESLSDNADILWINKP) the chain is on the cytoplasmic side. The helical transmembrane segment at 37–57 (WVHSLLRICAIISVISVCMNT) threads the bilayer. Residues 58–65 (PMTFEHYP) lie on the Extracellular side of the membrane. The helical transmembrane segment at 66–90 (PLQYVTFTLDTLLMFLYTAEMIAKM) threads the bilayer. The Cytoplasmic portion of the chain corresponds to 91-106 (HIRGIVKGDSSYVKDR). Residues 107-129 (WCVFDGFMVFCLWVSLVLQVFEI) form a helical membrane-spanning segment. Over 130–137 (ADIVDQMS) the chain is Extracellular. Residues 138–158 (PWGMLRIPRPLIMIRAFRIYF) traverse the membrane as a helical; Voltage-sensor segment. Residues 159–173 (RFELPRTRITNILKR) lie on the Cytoplasmic side of the membrane. The helical transmembrane segment at 174-199 (SGEQIWSVSIFLLFFLLLYGILGVQM) threads the bilayer. Over 200–269 (FGTFTYHCVV…YSGFNEIGTS (70 aa)) the chain is Extracellular. Intrachain disulfides connect Cys207/Cys239 and Cys229/Cys245. Asn210 and Asn216 each carry an N-linked (GlcNAc...) asparagine glycan. The pore-forming intramembrane region spans 270–289 (IFTVYEASSQEGWVFLMYRA). The Extracellular segment spans residues 290–294 (IDSFP). Residues 295–322 (RWRSYFYFITLIFFLAWLVKNVFIAVII) traverse the membrane as a helical segment. Residues 323-382 (ETFAEIRVQFQQMWGTRSSTTSTATTQMFHEDAAGGWQLVAVDVNKPQGRAPACLQKMMR) are Cytoplasmic-facing. The helical transmembrane segment at 383–403 (SSVFHMFILSMVTVDVIVAAS) threads the bilayer. Topologically, residues 404–416 (NYYKGENFRRQYD) are extracellular. Residues 417 to 439 (EFYLAEVAFTVLFDLEALLKIWC) traverse the membrane as a helical segment. The Cytoplasmic portion of the chain corresponds to 440 to 447 (LGFTGYIS). A helical transmembrane segment spans residues 448 to 468 (SSLHKFELLLVIGTTLHVYPD). Topologically, residues 469–472 (LYHS) are extracellular. The helical; Voltage-sensor transmembrane segment at 473-492 (QFTYFQVLRVVRLIKISPAL) threads the bilayer. The Cytoplasmic portion of the chain corresponds to 493–502 (EDFVYKIFGP). The chain crosses the membrane as a helical span at residues 503–530 (GKKLGSLVVFTASLLIVMSAISLQMFCF). Residues 531-543 (VEELDRFTTFPRA) are Extracellular-facing. Residues 544 to 563 (FMSMFQILTQEGWVDVMDQT) constitute an intramembrane region (pore-forming). At 564–578 (LNAVGHMWAPLVAIY) the chain is on the extracellular side. Residues 579 to 599 (FILYHLFATLILLSLFVAVIL) traverse the membrane as a helical segment. At 600–886 (DNLELDEDLK…QLYDLLGLVT (287 aa)) the chain is on the cytoplasmic side. A disordered region spans residues 762 to 785 (QERRSLRHGSNSQRISRGKSLETL). The stretch at 795–830 (YRNAQREDSEIKMIQEKKEQAEMKRKVQEEELRENH) forms a coiled coil. A helical membrane pass occupies residues 887 to 906 (YLDWVMITVTICSCISMMFE). Residues 907 to 915 (SPFRRVMHA) lie on the Extracellular side of the membrane. A helical transmembrane segment spans residues 916–939 (PTLQIAEYVFVIFMSIELNLKIMA). Topologically, residues 940-947 (DGLFFTPT) are cytoplasmic. A helical transmembrane segment spans residues 948-972 (AVIRDFGGVMDIFIYLVSLIFLCWM). At 973 to 980 (PQNVPAES) the chain is on the extracellular side. A helical; Voltage-sensor transmembrane segment spans residues 981-1003 (GAQLLMVLRCLRPLRIFKLVPQM). Topologically, residues 1004–1015 (RKVVRELFSGFK) are cytoplasmic. The chain crosses the membrane as a helical span at residues 1016–1039 (EIFLVSILLLTLMLVFASFGVQLF). Residues 1040–1104 (AGKLAKCNDP…NFNFDNVGNA (65 aa)) are Extracellular-facing. Cys1046 and Cys1057 are disulfide-bonded. An N-linked (GlcNAc...) asparagine glycan is attached at Asn1064. The pore-forming intramembrane region spans 1105–1124 (MLALFEVLSLKGWVEVRDVI). The Extracellular segment spans residues 1125-1129 (IHRVG). Residues 1130 to 1159 (PIHGIYIHVFVFLGCMIGLTLFVGVVIANF) traverse the membrane as a helical segment. The Cytoplasmic segment spans residues 1160–1210 (NENKGTALLTVDQRRWEDLKSRLKIAQPLHLPPRPDNDGFRAKMYDITQHP). A helical transmembrane segment spans residues 1211 to 1227 (FFKRTIALLVLAQSVLL). Residues 1228 to 1236 (SVKWDVDDP) lie on the Extracellular side of the membrane. The helical transmembrane segment at 1237-1260 (VTVPLATMSVVFTFIFVLEVTMKI) threads the bilayer. Topologically, residues 1261–1271 (IAMSPAGFWQS) are cytoplasmic. The helical transmembrane segment at 1272-1293 (RRNRYDLLVTSLGVVWVVLHFA) threads the bilayer. The Extracellular portion of the chain corresponds to 1294 to 1296 (LLN). A helical; Voltage-sensor membrane pass occupies residues 1297–1318 (AYTYMMGACVIVFRFFSICGKH). Residues 1319 to 1331 (VTLKMLLLTVVVS) lie on the Cytoplasmic side of the membrane. Residues 1332-1357 (MYKSFFIIVGMFLLLLCYAFAGVVLF) traverse the membrane as a helical segment. Residues 1358-1378 (GTVKYGENINRHANFSSAGKA) lie on the Extracellular side of the membrane. Positions 1379-1398 (ITVLFRIVTGEDWNKIMHDC) form an intramembrane region, pore-forming. The Extracellular segment spans residues 1399–1420 (MVQPPFCTPDEFTYWATDCGNY). Cys1405 and Cys1417 are joined by a disulfide. A helical membrane pass occupies residues 1421–1447 (AGALMYFCSFYVIIAYIMLNLLVAIIV). At 1448–1738 (ENFSLFYSTE…DESGDDLLDI (291 aa)) the chain is on the cytoplasmic side. The tract at residues 1602 to 1679 (EQERSRFLNP…WRLPSAPKPI (78 aa)) is disordered. Over residues 1613–1631 (SIETTQPSEDSNANSQDHS) the composition is skewed to polar residues. The segment covering 1633–1648 (QPETSSQQQLLSPTLS) has biased composition (low complexity).

It belongs to the NALCN family. As to quaternary structure, found in a complex with NALCN, UNC79, UNC80 and NACL1; these auxiliary subunits are indispensable for the function of the NALCN channel. Interacts with UNC80; required for the NALCN activation/inhibition by GPCRs in neurons. Found in a complex with NALCN, UNC79 and UNC80; UNC80 bridges NALCN to UNC79. Interacts with CHRM3. Post-translationally, phosphorylated on tyrosine residues. Widely expressed in the brain and spinal cord neurons. Expressed also in pancreatic islet cells.

It is found in the cell membrane. It carries out the reaction Na(+)(in) = Na(+)(out). Inhibited by low micromolar concentrations of Gd(3+) and high micromolar concentrations of verapamil. Insensitive to tetrodotoxin (TTX) and potentiated by low external Ca(2+) concentration. Functionally, voltage-gated ion channel responsible for the resting Na(+) permeability that controls neuronal excitability. NALCN channel functions as a multi-protein complex, which consists at least of NALCN, NALF1, UNC79 and UNC80. NALCN is the voltage-sensing, pore-forming subunit of the NALCN channel complex. NALCN channel complex is constitutively active and conducts monovalent cations but is blocked by physiological concentrations of extracellular divalent cations. In addition to its role in regulating neuronal excitability, is required for normal respiratory rhythm, systemic osmoregulation by controlling the serum sodium concentration and in the regulation of the intestinal pace-making activity in the interstitial cells of Cajal. Plays a critical role in both maintenance of spontaneous firing of substantia nigra pars reticulata (SNr) neurons and physiological modulation of SNr neuron excitability. NALCN channel is also activated by neuropeptides such as neurotensin and substance P (SP) through a SRC family kinases-dependent pathway. In addition, NALCN activity is enhanced/modulated by several GPCRs, such as CHRM3. The chain is Sodium leak channel NALCN (Nalcn) from Mus musculus (Mouse).